We begin with the raw amino-acid sequence, 583 residues long: Thiol:disulfide interchange protein DsbD (583 aa).

An N-terminal signal peptide occupies residues 1–20 (MLKRFIFLLVGITLTLSAHA). Intrachain disulfides connect cysteine 123–cysteine 128 and cysteine 200–cysteine 322. Helical transmembrane passes span 185-205 (IFWF…LPML), 237-257 (LTYT…QVAL), 261-281 (PVLI…FGLF), 302-322 (GGAF…ASPC), 344-364 (GLAL…ITLF), 375-395 (WLLK…VFLL), 405-425 (PLMW…VIPT), and 433-453 (VRIV…NLVW). The Thioredoxin domain occupies 440–583 (TFAVASYPWA…NQFLNWLNQL (144 aa)). Residues cysteine 500 and cysteine 503 are joined by a disulfide bond.

It belongs to the thioredoxin family. DsbD subfamily.

It localises to the cell inner membrane. The enzyme catalyses [protein]-dithiol + NAD(+) = [protein]-disulfide + NADH + H(+). The catalysed reaction is [protein]-dithiol + NADP(+) = [protein]-disulfide + NADPH + H(+). Its function is as follows. Required to facilitate the formation of correct disulfide bonds in some periplasmic proteins and for the assembly of the periplasmic c-type cytochromes. Acts by transferring electrons from cytoplasmic thioredoxin to the periplasm. This transfer involves a cascade of disulfide bond formation and reduction steps. This Actinobacillus pleuropneumoniae serotype 5b (strain L20) protein is Thiol:disulfide interchange protein DsbD.